The chain runs to 101 residues: Putative pterin-4-alpha-carbinolamine dehydratase (101 aa).

Belongs to the pterin-4-alpha-carbinolamine dehydratase family.

The enzyme catalyses (4aS,6R)-4a-hydroxy-L-erythro-5,6,7,8-tetrahydrobiopterin = (6R)-L-erythro-6,7-dihydrobiopterin + H2O. This chain is Putative pterin-4-alpha-carbinolamine dehydratase, found in Rhizobium etli (strain ATCC 51251 / DSM 11541 / JCM 21823 / NBRC 15573 / CFN 42).